The chain runs to 340 residues: 4-hydroxy-2-oxovalerate aldolase (340 aa).

The Pyruvate carboxyltransferase domain maps to 8–260 (VILHDMSLRD…SHGINLYDIM (253 aa)). 16–17 (RD) serves as a coordination point for substrate. Mn(2+) is bound at residue D17. The active-site Proton acceptor is the H20. Positions 170 and 199 each coordinate substrate. Residues H199 and H201 each coordinate Mn(2+). Y290 lines the substrate pocket.

Belongs to the 4-hydroxy-2-oxovalerate aldolase family.

It carries out the reaction (S)-4-hydroxy-2-oxopentanoate = acetaldehyde + pyruvate. This is 4-hydroxy-2-oxovalerate aldolase from Shewanella pealeana (strain ATCC 700345 / ANG-SQ1).